A 173-amino-acid polypeptide reads, in one-letter code: Large ribosomal subunit protein uL16 (173 aa).

This sequence belongs to the universal ribosomal protein uL16 family.

The chain is Large ribosomal subunit protein uL16 from Methanococcus maripaludis (strain DSM 14266 / JCM 13030 / NBRC 101832 / S2 / LL).